Consider the following 324-residue polypeptide: tRNA dimethylallyltransferase (324 aa).

18–25 (GPTAVGKT) is a binding site for ATP. 20–25 (TAVGKT) lines the substrate pocket. The interval 43-46 (DSRQ) is interaction with substrate tRNA.

The protein belongs to the IPP transferase family. Monomer. The cofactor is Mg(2+).

It catalyses the reaction adenosine(37) in tRNA + dimethylallyl diphosphate = N(6)-dimethylallyladenosine(37) in tRNA + diphosphate. Its function is as follows. Catalyzes the transfer of a dimethylallyl group onto the adenine at position 37 in tRNAs that read codons beginning with uridine, leading to the formation of N6-(dimethylallyl)adenosine (i(6)A). In Salinibacter ruber (strain DSM 13855 / M31), this protein is tRNA dimethylallyltransferase.